The primary structure comprises 257 residues: MGYLKRFALYISVMILMFAIAGCGKGNETKEGSKETQIKKSFAKTLDMYPIKNLEDLYDKEGYRDGEFEKGDKGMWTIYTDFAKSNKPGELDDEGMVLNLDRNTRTAKGHYFVTTFYRNGKLPDEKNYKIEMKNNKIILLDEVKDDKLKQKIENFKFFGQYANLKELKKYNNGDVSINENVPSYDVEFKMSNKDENVKQLRSRYNISTEKSPILKMHIDGDLKGSSVGYRKLEIDFSKRENSKLSVIEFLSYKPAKK.

The first 22 residues, 1–22 (MGYLKRFALYISVMILMFAIAG), serve as a signal peptide directing secretion. Cysteine 23 carries the N-palmitoyl cysteine lipid modification. Cysteine 23 carries S-diacylglycerol cysteine lipidation.

Belongs to the staphylococcal tandem lipoprotein family.

Its subcellular location is the cell membrane. This is an uncharacterized protein from Staphylococcus aureus (strain MRSA252).